We begin with the raw amino-acid sequence, 120 residues long: SAGA-associated factor 11 (120 aa).

Positions 40–60 are enriched in low complexity; sequence SLLNSSNSNTNSNTNGTIASN. Residues 40–82 are disordered; it reads SLLNSSNSNTNSNTNGTIASNGGNGTTSDENNEIENSTIQDKS. An SGF11-type zinc finger spans residues 93–114; sequence FRCLNCGRNIAGGRFASHISKC.

Belongs to the SGF11 family. In terms of assembly, component of the 1.8 MDa SAGA transcription coactivator-HAT complex. SAGA is built of 5 distinct domains with specialized functions. Within the SAGA complex, SUS1, SGF11, SGF73 and UBP8 form an additional subcomplex of SAGA called the DUB module (deubiquitination module). Interacts directly with SGF73, SUS1 and UBP8.

The protein resides in the nucleus. Functionally, functions as a component of the transcription regulatory histone acetylation (HAT) complex SAGA. At the promoters, SAGA is required for recruitment of the basal transcription machinery. It influences RNA polymerase II transcriptional activity through different activities such as TBP interaction and promoter selectivity, interaction with transcription activators, and chromatin modification through histone acetylation and deubiquitination. SAGA acetylates nucleosomal histone H3 to some extent (to form H3K9ac, H3K14ac, H3K18ac and H3K23ac). SAGA interacts with DNA via upstream activating sequences (UASs). Involved in transcriptional regulation of a subset of SAGA-regulated genes. Within the SAGA complex, participates in a subcomplex, that specifically deubiquitinates histones H2B. This is SAGA-associated factor 11 from Candida albicans (strain SC5314 / ATCC MYA-2876) (Yeast).